We begin with the raw amino-acid sequence, 729 residues long: 1,4-alpha-glucan branching enzyme GlgB (729 aa).

The Nucleophile role is filled by D407. E460 acts as the Proton donor in catalysis.

The protein belongs to the glycosyl hydrolase 13 family. GlgB subfamily. Monomer.

It carries out the reaction Transfers a segment of a (1-&gt;4)-alpha-D-glucan chain to a primary hydroxy group in a similar glucan chain.. The protein operates within glycan biosynthesis; glycogen biosynthesis. Catalyzes the formation of the alpha-1,6-glucosidic linkages in glycogen by scission of a 1,4-alpha-linked oligosaccharide from growing alpha-1,4-glucan chains and the subsequent attachment of the oligosaccharide to the alpha-1,6 position. In Pseudoalteromonas atlantica (strain T6c / ATCC BAA-1087), this protein is 1,4-alpha-glucan branching enzyme GlgB.